A 291-amino-acid chain; its full sequence is U7 snRNA-associated Sm-like protein LSm11 (291 aa).

The disordered stretch occupies residues 55–84; sequence ARGRARGAQRGQSRGPGGKRKGRKPEPDPE. The 76-residue stretch at 124 to 199 folds into the Sm domain; the sequence is SPLGELNRCV…LTLTRLFDRL (76 aa). Positions 155-289 are SM; that stretch reads GFIVAFDKFW…RGENVLLVHI (135 aa). Residues 203–266 form a disordered region; the sequence is EPGSHDPAKG…RRNRKEKVDY (64 aa). Residues 251 to 261 show a composition bias toward basic residues; sequence NRPKQRRRNRK.

Belongs to the snRNP Sm proteins family. As to quaternary structure, component of the heptameric ring U7 snRNP complex.

Its subcellular location is the nucleus. Functionally, component of the U7 snRNP complex that is involved in the histone 3'-end pre-mRNA processing. Increases U7 snRNA levels but not histone 3'-end pre-mRNA processing activity, when overexpressed. Binds specifically to the Sm-binding site of U7 snRNA. The chain is U7 snRNA-associated Sm-like protein LSm11 from Xenopus laevis (African clawed frog).